The primary structure comprises 375 residues: MRVALISTSIFALCCSSNVRAEAVLPVNPSPYLVGAITRNMFRVPKPDQDLVLLSAHRGSWEVYPENSAYALQDAWNSQIEAVEVDARFTADKEVILSHDYRMERESTGTGFLYDQNYSQVQQADLRDRHGRVFKDSRGRNAKFMTFSAALDLLAQYVTDDGHGYVMIIDVKGAVDDQDPTDPIELTQRCLDILAAKKNPKLSKAVVFKLKAKDAVDIGTFLNRTTYDPNVMGGLIVVENPDDQNVKDSNYDPHEDTIYDQWNVAPFPVQFEMNQFYKGDGLQAYLDYVDQKQGFATYHESNYYPEGVANSAGKCCFEHNTDPRSVAHGGIVPDYRGEPEMAIVNRTNLITTDWPDVVADMLRQLGRRNTSKLSR.

The GP-PDE domain maps to 52–301; sequence VLLSAHRGSW…KQGFATYHES (250 aa).

This is an uncharacterized protein from Sinorhizobium fredii (strain NBRC 101917 / NGR234).